A 409-amino-acid polypeptide reads, in one-letter code: Peptidase T (409 aa).

Histidine 78 is a binding site for Zn(2+). Residue aspartate 80 is part of the active site. Residue aspartate 140 participates in Zn(2+) binding. The active-site Proton acceptor is the glutamate 173. 3 residues coordinate Zn(2+): glutamate 174, aspartate 196, and histidine 379.

Belongs to the peptidase M20B family. Zn(2+) serves as cofactor.

Its subcellular location is the cytoplasm. It catalyses the reaction Release of the N-terminal residue from a tripeptide.. Functionally, cleaves the N-terminal amino acid of tripeptides. In Salmonella choleraesuis (strain SC-B67), this protein is Peptidase T.